The sequence spans 612 residues: Elongation factor 4 (612 aa).

The tr-type G domain maps to 11–193 (KHIRNFSIVA…EIVKKVPAPD (183 aa)). GTP-binding positions include 23–28 (DHGKST) and 140–143 (NKID).

It belongs to the TRAFAC class translation factor GTPase superfamily. Classic translation factor GTPase family. LepA subfamily.

The protein resides in the cell membrane. It carries out the reaction GTP + H2O = GDP + phosphate + H(+). In terms of biological role, required for accurate and efficient protein synthesis under certain stress conditions. May act as a fidelity factor of the translation reaction, by catalyzing a one-codon backward translocation of tRNAs on improperly translocated ribosomes. Back-translocation proceeds from a post-translocation (POST) complex to a pre-translocation (PRE) complex, thus giving elongation factor G a second chance to translocate the tRNAs correctly. Binds to ribosomes in a GTP-dependent manner. The polypeptide is Elongation factor 4 (Lactobacillus johnsonii (strain CNCM I-12250 / La1 / NCC 533)).